Reading from the N-terminus, the 161-residue chain is Urease accessory protein UreE (161 aa).

This sequence belongs to the UreE family.

Its subcellular location is the cytoplasm. Its function is as follows. Involved in urease metallocenter assembly. Binds nickel. Probably functions as a nickel donor during metallocenter assembly. This chain is Urease accessory protein UreE, found in Pseudarthrobacter chlorophenolicus (strain ATCC 700700 / DSM 12829 / CIP 107037 / JCM 12360 / KCTC 9906 / NCIMB 13794 / A6) (Arthrobacter chlorophenolicus).